The following is an 875-amino-acid chain: Acetyl-coenzyme A carboxylase carboxyl transferase subunit alpha, chloroplastic (875 aa).

The transit peptide at 1–50 (MASSSATLVGSTASDLLRSSTTGFTGVPLRTLGRAGLVLKRRDLTVSVTA) directs the protein to the chloroplast. One can recognise a CoA carboxyltransferase C-terminal domain in the interval 128–380 (EAKYQKALVE…KIAINEAMDE (253 aa)). A coiled-coil region spans residues 664 to 705 (LLLDKNKAATRKQELKKKSDEHKEAARLEQELKKKFDEVMDT). Positions 845 to 875 (KEKYENLTRPAGDTLTDDKLREKVGVNRNFS) are disordered. Basic and acidic residues predominate over residues 860–869 (TDDKLREKVG).

This sequence belongs to the AccA family. Acetyl-CoA carboxylase is a heterohexamer composed of biotin carboxyl carrier protein, biotin carboxylase and two subunits each of ACCase subunit alpha and ACCase plastid-coded subunit beta (accD).

Its subcellular location is the plastid. The protein localises to the chloroplast inner membrane. The catalysed reaction is N(6)-carboxybiotinyl-L-lysyl-[protein] + acetyl-CoA = N(6)-biotinyl-L-lysyl-[protein] + malonyl-CoA. Its pathway is lipid metabolism; malonyl-CoA biosynthesis; malonyl-CoA from acetyl-CoA: step 1/1. Its activity is regulated as follows. Activated by reductants such as dithiothreitol (DTT), and by thioredoxin in vivo, following exposure to light. Component of the acetyl coenzyme A carboxylase (ACC) complex. First, biotin carboxylase catalyzes the carboxylation of biotin on its carrier protein (BCCP) and then the CO(2) group is transferred by the carboxyltransferase to acetyl-CoA to form malonyl-CoA. This Pisum sativum (Garden pea) protein is Acetyl-coenzyme A carboxylase carboxyl transferase subunit alpha, chloroplastic (ACCA).